We begin with the raw amino-acid sequence, 160 residues long: Large ribosomal subunit protein uL22c (160 aa).

Belongs to the universal ribosomal protein uL22 family. In terms of assembly, part of the 50S ribosomal subunit.

The protein localises to the plastid. It is found in the chloroplast. Functionally, this protein binds specifically to 23S rRNA. Its function is as follows. The globular domain of the protein is located near the polypeptide exit tunnel on the outside of the subunit, while an extended beta-hairpin is found that lines the wall of the exit tunnel in the center of the 70S ribosome. In Draba nemorosa (Woodland whitlowgrass), this protein is Large ribosomal subunit protein uL22c (rpl22).